The sequence spans 219 residues: Uracil-DNA glycosylase (219 aa).

The Proton acceptor role is filled by Asp-61.

It belongs to the uracil-DNA glycosylase (UDG) superfamily. UNG family.

The protein resides in the cytoplasm. It catalyses the reaction Hydrolyzes single-stranded DNA or mismatched double-stranded DNA and polynucleotides, releasing free uracil.. In terms of biological role, excises uracil residues from the DNA which can arise as a result of misincorporation of dUMP residues by DNA polymerase or due to deamination of cytosine. This chain is Uracil-DNA glycosylase, found in Neisseria meningitidis serogroup C (strain 053442).